We begin with the raw amino-acid sequence, 988 residues long: Isoleucine--tRNA ligase (988 aa).

The short motif at 60–70 is the 'HIGH' region element; that stretch reads PYANGALHMGH. Glu-570 is an L-isoleucyl-5'-AMP binding site. The 'KMSKS' region motif lies at 611-615; sequence KMSKS. Lys-614 lines the ATP pocket. Residues Cys-957, Cys-960, Cys-977, and Cys-980 each contribute to the Zn(2+) site.

It belongs to the class-I aminoacyl-tRNA synthetase family. IleS type 1 subfamily. As to quaternary structure, monomer. The cofactor is Zn(2+).

Its subcellular location is the cytoplasm. It catalyses the reaction tRNA(Ile) + L-isoleucine + ATP = L-isoleucyl-tRNA(Ile) + AMP + diphosphate. In terms of biological role, catalyzes the attachment of isoleucine to tRNA(Ile). As IleRS can inadvertently accommodate and process structurally similar amino acids such as valine, to avoid such errors it has two additional distinct tRNA(Ile)-dependent editing activities. One activity is designated as 'pretransfer' editing and involves the hydrolysis of activated Val-AMP. The other activity is designated 'posttransfer' editing and involves deacylation of mischarged Val-tRNA(Ile). In Synechocystis sp. (strain ATCC 27184 / PCC 6803 / Kazusa), this protein is Isoleucine--tRNA ligase.